The primary structure comprises 254 residues: (2Z,6E)-farnesyl diphosphate synthase (254 aa).

Asp34 is an active-site residue. A Mg(2+)-binding site is contributed by Asp34. Substrate is bound by residues 35–38, Trp39, His52, and 80–82; these read GNRR and STD. The active-site Proton acceptor is the Asn83. Substrate is bound by residues Arg86, Arg203, and 209–211; that span reads RLS. Mg(2+) is bound at residue Glu222.

The protein belongs to the UPP synthase family. Z-FPP synthase subfamily. As to quaternary structure, homodimer. The cofactor is Mg(2+).

It carries out the reaction isopentenyl diphosphate + (2E)-geranyl diphosphate = (2Z,6E)-farnesyl diphosphate + diphosphate. Its function is as follows. Catalyzes the condensation of only one isopentenyl pyrophosphate (IPP) unit in the cis configuration to E-geranyl diphosphate (E-GPP) generating the 15 carbon product (2Z,6E)-farnesyl diphosphate (Z-FPP or EZ-FPP). Only geranyl diphosphate (GPP) can be used as isoprenyl acceptor. This Thermobifida fusca (strain YX) protein is (2Z,6E)-farnesyl diphosphate synthase.